Here is a 1270-residue protein sequence, read N- to C-terminus: MVDSVGFAEAWRAQFPDSEPPRMELRSVGDIEQELERCKASIRRLEQEVNQERFRMIYLQTLLAKEKKSYDRQRWGFRRAAQPPDGAAEPRASAPRPPPAPADGADPAPVEESEARPDGEGSPSKGRSASARRPAAAASADRDDRGPPTSVAALRSNFEKIRKGPAQPGSADAEKPFYVNVEFHHERGLVKVNDKEVSDRISSLGSQAMQMERKKSQQSAGQGLGEAPRPHYRGRSSESSCGLDGDYEDAELNPRFLKDNLINANGGNRPPWPPLEYQPYQSIYVGGMMVEGEGKSPLLRSQSTSEQEKRLTWPRRSYSPRSFEDSGGGYTPDCSSNENLTSSEEDFSSGQSSRVSPSPTTYRMFRDKSRSPSQNSQQSFDSSSPPTPQCQKRHRQCQVVVSEATIVGVRKTGQIWPSDGDSTFQGEADSSFGTPPGYGCAADQAEEQRRHQDGLPYIDDSPSSSPHLSSKGRGSLASGALDPTKVSELDLEKGLEMRKWVLSGILASEETYLSHLEALLLPMKPLKAAATTSQPVLTSQQIETIFFKVPELYEIHKEFYDGLFPRVQQWSHQQRVGDLFQKLASQLGVYRAFVDNYGVAMETAEKCCQANAQFAEISENLRARSNKDVKDSTTKNSLETLLYKPVDRVTRSTLVLHDLLKHTPSSHPDHSLLQDALRISQNFLSSINEEITPRRQSMTVKKGEHRQLLKDSFMVELVEGARKLRHIFLFTDLLLCTKLKKQSGGKTQQYDCKWYIPLTDLSFQMVDELEALPNIPLVPDEELDALKIKISQIKSDIQREKRANKGSKVMERLRKKLSEQESLLLLMSPSMAFRVHSRNGKSYTFLISSDYERAEWRESIREQQKKCFKSFSLTSVELQMLTNSCVKLQTVHHIPLTINKEDDESPGLYGFLHVIVHSATGFKQSSNLYCTLEVDSFGYFVNKAKTRVYRDTTEPNWNEEFEIELEGSQTLRILCYEKCYNKMKMTKEDGESADKLMGKGQVQLDPQTLQDRDWQRTVIDMNGIEVKLSVKFTSREFSLKRMPSRKQTGVFGVKIAVVTKRERSKVPYIVRQCVEEIERRGMEEVGIYRVSGVATDIQALKAAFDVNNKDVSVMMSEMDVNAIAGTLKLYFRELPEPLFTDEFYPNFAEGIALSDPVAKESCMLNLLLSLPEANLLTFLFLLDHLKRVAEKETVNKMSLHNLATVFGPTLLRPSEKESKLPANPSQPITMTDSWSLEVMSQVQVLLYFLQLEAIPAPDSKRQSILFSTEV.

At methionine 1 the chain carries N-acetylmethionine. The interval 1–428 is kinase; the sequence is MVDSVGFAEA…DGDSTFQGEA (428 aa). Positions 28–55 form a coiled coil; the sequence is VGDIEQELERCKASIRRLEQEVNQERFR. Positions 67–173 are disordered; sequence KKSYDRQRWG…GPAQPGSADA (107 aa). Positions 121-139 are enriched in low complexity; the sequence is GSPSKGRSASARRPAAAAS. 2 positions are modified to phosphoserine: serine 122 and serine 139. Tyrosine 178 carries the phosphotyrosine; by HCK modification. Residues 198–387 are binding to ABL SH2-domain; it reads SDRISSLGSQ…QSFDSSSPPT (190 aa). 3 disordered regions span residues 201-249, 295-396, and 412-481; these read ISSL…DYED, KSPL…RHRQ, and TGQI…SGAL. A phosphoserine mark is found at serine 203, serine 216, and serine 237. Residue tyrosine 247 is modified to Phosphotyrosine; by FES. Low complexity-rich tracts occupy residues 348–358 and 371–384; these read SSGQSSRVSPS and SPSQ…DSSS. Serine 358, serine 379, and serine 384 each carry phosphoserine. Threonine 387 is modified (phosphothreonine). Phosphoserine occurs at positions 461 and 465. Arginine 473 carries the omega-N-methylarginine modification. Phosphoserine is present on residues serine 475 and serine 487. The DH domain occupies 497–690; the sequence is MRKWVLSGIL…QNFLSSINEE (194 aa). The residue at position 553 (tyrosine 553) is a Phosphotyrosine. Threonine 640 bears the Phosphothreonine mark. Position 643 is a phosphotyrosine (tyrosine 643). Threonine 692 is subject to Phosphothreonine. Residues 707 to 865 form the PH domain; it reads QLLKDSFMVE…WRESIREQQK (159 aa). The C2 domain occupies 892-1019; it reads HHIPLTINKE…QDRDWQRTVI (128 aa). The Rho-GAP domain occupies 1053 to 1247; the sequence is VKIAVVTKRE…VMSQVQVLLY (195 aa). At serine 1263 the chain carries Phosphoserine.

Homotetramer. Interacts with PDZK1. Interacts with HCK, FES/FPS, ABL1, PIK3R1 and GRB2. May interact with CCPG1. Interacts with SH2D5. Interacts with DLG4. Post-translationally, autophosphorylated. Phosphorylated by FES/FPS on tyrosine residues, leading to down-regulation of the BCR kinase activity. Phosphorylation at Tyr-178 by HCK is important for interaction with GRB2. As to expression, expressed in brain. In hippocampal subregions, most abundant in the CA1 region and expressed at successively lower levels in the dentate gyrus and the CA3 region.

It is found in the postsynaptic density. The protein localises to the cell projection. The protein resides in the dendritic spine. It localises to the axon. Its subcellular location is the synapse. It catalyses the reaction L-seryl-[protein] + ATP = O-phospho-L-seryl-[protein] + ADP + H(+). The catalysed reaction is L-threonyl-[protein] + ATP = O-phospho-L-threonyl-[protein] + ADP + H(+). In terms of biological role, protein with a unique structure having two opposing regulatory activities toward small GTP-binding proteins. The C-terminus is a GTPase-activating protein (GAP) domain which stimulates GTP hydrolysis by RAC1, RAC2 and CDC42. Accelerates the intrinsic rate of GTP hydrolysis of RAC1 or CDC42, leading to down-regulation of the active GTP-bound form. The central Dbl homology (DH) domain functions as guanine nucleotide exchange factor (GEF) that modulates the GTPases CDC42, RHOA and RAC1. Promotes the conversion of CDC42, RHOA and RAC1 from the GDP-bound to the GTP-bound form. The amino terminus contains an intrinsic kinase activity. Functions as an important negative regulator of neuronal RAC1 activity. Regulates macrophage functions such as CSF1-directed motility and phagocytosis through the modulation of RAC1 activity. Plays a major role as a RHOA GEF in keratinocytes being involved in focal adhesion formation and keratinocyte differentiation. This is Breakpoint cluster region protein from Mus musculus (Mouse).